Here is a 515-residue protein sequence, read N- to C-terminus: Tripartite motif-containing protein 5 (515 aa).

Ala-2 carries the N-acetylalanine modification. The segment at 15–60 adopts an RING-type zinc-finger fold; it reads CPICLELLTEPLSLPCGHSLCQACITANHKESMLYKEEERSCPVCR. Residue Ser-87 is modified to Phosphoserine. The segment at 92 to 133 adopts a B box-type zinc-finger fold; sequence QKVDHCARHGEKLLLFCQEDSKVICWLCERSQEHRGHHTFLM. Zn(2+) is bound by residues Cys-97, His-100, Cys-119, and His-125. A coiled-coil region spans residues 137–225; it reads AQEYHVKLQT…LTKSETEMVQ (89 aa). The interval 187-200 is required for interaction with GABARAP and for autophagy; sequence FEQLREILDWEESN. A B30.2/SPRY domain is found at 283-515; that stretch reads LKGMLDMFRE…VPMTLCSPSS (233 aa).

It belongs to the TRIM/RBCC family. Can form homodimers and homotrimers. In addition to lower-order dimerization, also exhibits a higher-order multimerization and both low- and high-order multimerizations are essential for its restriction activity. Interacts with BTBD1 and BTBD2. Interacts with PSMC4, PSMC5, PSMD7 and HSPA8/HSC70. Interacts (via B30.2/SPRY domain) with HSPA1A/B. Interacts with PSMC2, MAP3K7/TAK1, TAB2 and TAB3. Interacts with SQSTM1. Interacts with TRIM6 and TRIM34. Interacts with ULK1 (phosphorylated form), GABARAP, GABARAPL1, GABARAPL2, MAP1LC3A, MAP1LC3C and BECN1. Degraded in a proteasome-independent fashion in the absence of viral infection but in a proteasome-dependent fashion following exposure to restriction sensitive virus. In terms of processing, autoubiquitinated in a RING finger- and UBE2D2-dependent manner. Monoubiquitinated by TRIM21. Deubiquitinated by Yersinia YopJ. Ubiquitination may not lead to proteasomal degradation.

It is found in the cytoplasm. The protein resides in the nucleus. The enzyme catalyses S-ubiquitinyl-[E2 ubiquitin-conjugating enzyme]-L-cysteine + [acceptor protein]-L-lysine = [E2 ubiquitin-conjugating enzyme]-L-cysteine + N(6)-ubiquitinyl-[acceptor protein]-L-lysine.. The protein operates within protein modification; protein ubiquitination. Its function is as follows. Capsid-specific restriction factor that prevents infection from non-host-adapted retroviruses. Blocks viral replication early in the life cycle, after viral entry but before reverse transcription. In addition to acting as a capsid-specific restriction factor, also acts as a pattern recognition receptor that activates innate immune signaling in response to the retroviral capsid lattice. Binding to the viral capsid triggers its E3 ubiquitin ligase activity, and in concert with the heterodimeric ubiquitin conjugating enzyme complex UBE2V1-UBE2N (also known as UBC13-UEV1A complex) generates 'Lys-63'-linked polyubiquitin chains, which in turn are catalysts in the autophosphorylation of the MAP3K7/TAK1 complex (includes TAK1, TAB2, and TAB3). Activation of the MAP3K7/TAK1 complex by autophosphorylation results in the induction and expression of NF-kappa-B and MAPK-responsive inflammatory genes, thereby leading to an innate immune response in the infected cell. Restricts infection by human immunodeficiency virus type 1 (HIV-1) and N-tropic murine leukemia virus (N-MLV). Plays a role in regulating autophagy through activation of autophagy regulator BECN1 by causing its dissociation from its inhibitors BCL2 and TAB2. This chain is Tripartite motif-containing protein 5 (TRIM5), found in Chlorocebus pygerythrus (Vervet monkey).